Here is an 851-residue protein sequence, read N- to C-terminus: DNA mismatch repair protein MutS (851 aa).

614 to 621 (GPNMGGKS) is a binding site for ATP.

It belongs to the DNA mismatch repair MutS family.

Its function is as follows. This protein is involved in the repair of mismatches in DNA. It is possible that it carries out the mismatch recognition step. This protein has a weak ATPase activity. This Yersinia pseudotuberculosis serotype O:1b (strain IP 31758) protein is DNA mismatch repair protein MutS.